Reading from the N-terminus, the 183-residue chain is Nucleoside triphosphate pyrophosphatase (183 aa).

Aspartate 71 serves as the catalytic Proton acceptor.

This sequence belongs to the Maf family. A divalent metal cation is required as a cofactor.

The protein resides in the cytoplasm. The catalysed reaction is a ribonucleoside 5'-triphosphate + H2O = a ribonucleoside 5'-phosphate + diphosphate + H(+). It catalyses the reaction a 2'-deoxyribonucleoside 5'-triphosphate + H2O = a 2'-deoxyribonucleoside 5'-phosphate + diphosphate + H(+). In terms of biological role, nucleoside triphosphate pyrophosphatase. May have a dual role in cell division arrest and in preventing the incorporation of modified nucleotides into cellular nucleic acids. This is Nucleoside triphosphate pyrophosphatase from Campylobacter jejuni subsp. jejuni serotype O:2 (strain ATCC 700819 / NCTC 11168).